Consider the following 464-residue polypeptide: tRNA modification GTPase MnmE (464 aa).

Positions 29, 91, and 131 each coordinate (6S)-5-formyl-5,6,7,8-tetrahydrofolate. In terms of domain architecture, TrmE-type G spans 226–387 (GLKVALTGKP…LINYLLKKCG (162 aa)). A K(+)-binding site is contributed by Asn-236. GTP-binding positions include 236 to 241 (NVGKSS), 255 to 261 (TDLPGTT), and 280 to 283 (DTAG). Ser-240 contacts Mg(2+). 3 residues coordinate K(+): Thr-255, Leu-257, and Thr-260. Thr-261 is a binding site for Mg(2+). Lys-464 contributes to the (6S)-5-formyl-5,6,7,8-tetrahydrofolate binding site.

The protein belongs to the TRAFAC class TrmE-Era-EngA-EngB-Septin-like GTPase superfamily. TrmE GTPase family. As to quaternary structure, homodimer. Heterotetramer of two MnmE and two MnmG subunits. Requires K(+) as cofactor.

Its subcellular location is the cytoplasm. Functionally, exhibits a very high intrinsic GTPase hydrolysis rate. Involved in the addition of a carboxymethylaminomethyl (cmnm) group at the wobble position (U34) of certain tRNAs, forming tRNA-cmnm(5)s(2)U34. This Prochlorococcus marinus (strain NATL2A) protein is tRNA modification GTPase MnmE.